A 120-amino-acid chain; its full sequence is Small ribosomal subunit protein bS16 (120 aa).

The disordered stretch occupies residues 81-120 (GLAKRPARNNPQKAEPGEKSKERAAKRAEKAAAPAEDAAA). Positions 95–110 (EPGEKSKERAAKRAEK) are enriched in basic and acidic residues. The span at 111 to 120 (AAAPAEDAAA) shows a compositional bias: low complexity.

The protein belongs to the bacterial ribosomal protein bS16 family.

This Methylorubrum populi (strain ATCC BAA-705 / NCIMB 13946 / BJ001) (Methylobacterium populi) protein is Small ribosomal subunit protein bS16.